The primary structure comprises 343 residues: MHRLALTAQDNLAVAPMLADLAGRYPDIEDPELIRSAPVLAAKGLPPHLLAFLDDFRLREPSALCVISGLDVDQDRLGPTPEHWRDSQIGSRSLNLEIFFLLCGAALGDVFGWATQQDGRIMHDVLPIKGHEHYELGSNSLQHLSWHTEDSFHPCRGDYVALMCLKNPYEAETMVCDAGDLDWPNLDVDALFEPVFTQMPDNSHLPQNTAESTGDPTKDRLRARSFELIKSWNENPVRRAVLYGDRQNPYMALDPYHMKMDDWSERSLEAFQALCEEIEAKMQDVVLHPGDIAFIDNFRAVHGRRSFRARYDGSDRWLKRLNITRNLRGSRAWRPAPDDRVIY.

Fe cation-binding residues include His147 and Glu149. Positions 199–215 are enriched in polar residues; sequence MPDNSHLPQNTAESTGD. The tract at residues 199 to 218 is disordered; sequence MPDNSHLPQNTAESTGDPTK. His302 contacts Fe cation. Arg316 is a 2-oxoglutarate binding site.

The protein belongs to the clavaminate synthase family. Requires Fe(2+) as cofactor.

It catalyses the reaction L-ornithine + 2-oxoglutarate + O2 = (3S)-3-hydroxy-L-ornithine + succinate + CO2. The catalysed reaction is L-arginine + 2-oxoglutarate + O2 = (2S,3S)-hydroxyarginine + succinate + CO2. Its function is as follows. Alpha-ketoglutarate-dependent dioxygenase that in vitro catalyzes the regio- and stereoselective hydroxylation of L-ornithine and L-arginine, leading to (3S)-3-hydroxy-L-ornithine and (3S)-3-hydroxy-L-arginine, respectively. Cannot use L-lysine, D-ornithine, or D-arginine as substrate. The sequence is that of L-ornithine/L-arginine 3-hydroxylase from Catenulispora acidiphila (strain DSM 44928 / JCM 14897 / NBRC 102108 / NRRL B-24433 / ID139908).